A 152-amino-acid chain; its full sequence is Protein D1 (152 aa).

The protein belongs to the phosphatidylethanolamine-binding protein family.

This is Protein D1 (D1) from Onchocerca volvulus.